Consider the following 454-residue polypeptide: UPF0210 protein Cphy_2797 (454 aa).

This sequence belongs to the UPF0210 family. As to quaternary structure, homodimer.

This chain is UPF0210 protein Cphy_2797, found in Lachnoclostridium phytofermentans (strain ATCC 700394 / DSM 18823 / ISDg) (Clostridium phytofermentans).